Consider the following 131-residue polypeptide: Acyl carrier protein 3, mitochondrial (131 aa).

The transit peptide at Met1 to Thr39 directs the protein to the mitochondrion. In terms of domain architecture, Carrier spans Asp49 to Thr124. Ser84 is modified (O-(pantetheine 4'-phosphoryl)serine).

It belongs to the acyl carrier protein (ACP) family. Complex I is composed of at least 49 different subunits. 4'-phosphopantetheine is transferred from CoA to a specific serine of the apo-ACP-like protein.

Its subcellular location is the mitochondrion. It functions in the pathway lipid metabolism; fatty acid biosynthesis. Its function is as follows. Carrier of the growing fatty acid chain in fatty acid biosynthesis. May be involved in the synthesis of short and medium chain fatty acids. Accessory and non-catalytic subunit of the mitochondrial membrane respiratory chain NADH dehydrogenase (Complex I), which functions in the transfer of electrons from NADH to the respiratory chain. This is Acyl carrier protein 3, mitochondrial (MTACP2) from Arabidopsis thaliana (Mouse-ear cress).